The following is a 417-amino-acid chain: mRNA export factor ICP27 homolog (417 aa).

The segment covering 1 to 28 (MEDIIEGGISSDDDFDSSDSSSDEEESD) has biased composition (acidic residues). Residues 1 to 143 (MEDIIEGGIS…NGPLRNGPPR (143 aa)) are disordered. The interaction with RNA stretch occupies residues 64 to 120 (RQRSPITWEHQSPLSRVYRSPSPMRFGKRPRISSNSTSRSCKTSWADRVREAAAQRR). Positions 88-94 (RFGKRPR) match the Nuclear localization signal motif. The span at 96–107 (SSNSTSRSCKTS) shows a compositional bias: low complexity. Residues 106 to 120 (TSWADRVREAAAQRR) form an interaction with host ALYREF or mouse ALYREF2 region. Residues 108–117 (WADRVREAAA) are compositionally biased toward basic and acidic residues. The Nuclear localization signal signature appears at 118–127 (QRRPSRPFRK). Residues 120–130 (RPSRPFRKPYS) are compositionally biased toward basic residues. Over residues 132–141 (PRNGPLRNGP) the composition is skewed to low complexity. Zn(2+) contacts are provided by Cys295, His385, Cys389, and Cys394. Residues 295 to 394 (CLMQTTPQDH…HLNKCPSSTC (100 aa)) form a CHC2-type zinc finger.

Belongs to the HHV-1 ICP27 protein family. In terms of assembly, homodimer. Homodimerization is required for transactivation. Interacts with host ALYREF and with mouse ALYREF2. Associates in a complex with RNA, and host export factors NXF1/TAP and ALYREF or ALYREF2; these interactions allow nuclear export of viral transcripts.

Its subcellular location is the host cytoplasm. It localises to the host nucleus. Its function is as follows. Probably acts as a viral splicing factor that regulates viral RNA splicing. Functions as a multifunctional regulator of the expression of viral lytic genes. Early protein that promotes the accumulation and nuclear export of viral intronless RNA transcripts by interacting with mRNAs and cellular export proteins. This chain is mRNA export factor ICP27 homolog (EJRF1), found in Saimiriine herpesvirus 2 (strain 11) (SaHV-2).